Reading from the N-terminus, the 250-residue chain is mRNA-decapping protein g5R (250 aa).

The region spanning 97-243 (QKFRKNWLLP…IIGPAFNFIK (147 aa)) is the Nudix hydrolase domain. The Nudix box motif lies at 132 to 153 (GKPKEDESDLTCAIREFEEETG). Residue Glu138 participates in Mg(2+) binding. Glu147 serves as the catalytic Nucleophile. 2 residues coordinate Mg(2+): Glu151 and Asp173.

This sequence belongs to the Nudix hydrolase family. DIPP subfamily. In terms of assembly, interacts with host RPL23A. Mg(2+) is required as a cofactor. It depends on Mn(2+) as a cofactor.

The protein resides in the host rough endoplasmic reticulum. The enzyme catalyses diphospho-myo-inositol polyphosphate + H2O = myo-inositol polyphosphate + phosphate.. Functionally, decapping enzyme required for the removal of the 5'-end m7GpppN cap tethered to viral and host mRNAs to allow their decay in cells. May therefore accelerate viral and cellular mRNA turnover to eliminate competing host mRNAs and allow stage-specific synthesis of viral proteins. Acceleration of the turnover of cellular transcripts may even promote the shutoff of host protein synthesis. In addition to the mRNA cap, g5R also efficiently hydrolyzes diphosphoinositol polyphosphates. Down-regulation of the level of PP-InsP5 (diphosphoinositol pentakisphosphate) may play a role in viral manipulation of the cellular secretory pathway, a step necessary for the formation of virions. Binds viral and cellular poly(A) mRNAs, thereby decreasing both types of mRNAs. This African swine fever virus (isolate Tick/South Africa/Pretoriuskop Pr4/1996) (ASFV) protein is mRNA-decapping protein g5R.